Reading from the N-terminus, the 192-residue chain is MEYRSLTLDDFLSRFQLLRPQINRETLNHRQAAVLIPIVRRPQPGLLLTQRSIHLRKHAGQVAFPGGAVDDTDTSVIAAALREAEEEVAIPPSAVEVIGVLPPVDSVTGYQVTPVVGIIPPDLPYSASEDEVSAVFEMPLAQALHLGRYHPLDIYRRGDSHRVWLSWYEQYFVWGMTAGIIRELALQIGVKP.

Residues 29–160 (HRQAAVLIPI…PLDIYRRGDS (132 aa)) enclose the Nudix hydrolase domain. The Nudix box motif lies at 67-89 (GAVDDTDTSVIAAALREAEEEVA). Mg(2+)-binding residues include Glu-83 and Glu-87.

The protein belongs to the Nudix hydrolase family. PCD1 subfamily. Mn(2+) is required as a cofactor. Requires Mg(2+) as cofactor.

In terms of biological role, probably mediates the hydrolysis of some nucleoside diphosphate derivatives. This is an uncharacterized protein from Escherichia coli O7:K1 (strain IAI39 / ExPEC).